The primary structure comprises 106 residues: Large ribosomal subunit protein uL24 (106 aa).

Basic and acidic residues predominate over residues 84–97 (EKIGRELGAKEKAR). The interval 84–106 (EKIGRELGAKEKARLQKRKAAAK) is disordered.

It belongs to the universal ribosomal protein uL24 family. In terms of assembly, part of the 50S ribosomal subunit.

In terms of biological role, one of two assembly initiator proteins, it binds directly to the 5'-end of the 23S rRNA, where it nucleates assembly of the 50S subunit. One of the proteins that surrounds the polypeptide exit tunnel on the outside of the subunit. In Anaeromyxobacter dehalogenans (strain 2CP-C), this protein is Large ribosomal subunit protein uL24.